The primary structure comprises 515 residues: Galactose/methyl galactoside import ATP-binding protein MglA (515 aa).

2 ABC transporter domains span residues Leu-8–Glu-243 and Ile-254–Leu-499. Gly-40–Ser-47 serves as a coordination point for ATP.

Belongs to the ABC transporter superfamily. Galactose/methyl galactoside importer (TC 3.A.1.2.3) family. In terms of assembly, the complex is composed of one ATP-binding protein (MglA), two transmembrane proteins (MglC) and a solute-binding protein (MglB).

Its subcellular location is the cell membrane. The enzyme catalyses D-galactose(out) + ATP + H2O = D-galactose(in) + ADP + phosphate + H(+). It catalyses the reaction methyl beta-D-galactoside(out) + ATP + H2O = methyl beta-D-galactoside(in) + ADP + phosphate + H(+). In terms of biological role, part of the ABC transporter complex MglABC involved in galactose/methyl galactoside import. Responsible for energy coupling to the transport system. This is Galactose/methyl galactoside import ATP-binding protein MglA from Clostridium perfringens (strain ATCC 13124 / DSM 756 / JCM 1290 / NCIMB 6125 / NCTC 8237 / Type A).